Consider the following 81-residue polypeptide: Large ribosomal subunit protein bL31B (81 aa).

It belongs to the bacterial ribosomal protein bL31 family. Type B subfamily. Part of the 50S ribosomal subunit.

The protein is Large ribosomal subunit protein bL31B of Limosilactobacillus fermentum (strain NBRC 3956 / LMG 18251) (Lactobacillus fermentum).